We begin with the raw amino-acid sequence, 339 residues long: Phenylalanine--tRNA ligase alpha subunit (339 aa).

Residue E254 participates in Mg(2+) binding.

It belongs to the class-II aminoacyl-tRNA synthetase family. Phe-tRNA synthetase alpha subunit type 1 subfamily. Tetramer of two alpha and two beta subunits. Requires Mg(2+) as cofactor.

Its subcellular location is the cytoplasm. The enzyme catalyses tRNA(Phe) + L-phenylalanine + ATP = L-phenylalanyl-tRNA(Phe) + AMP + diphosphate + H(+). This is Phenylalanine--tRNA ligase alpha subunit from Dictyoglomus turgidum (strain DSM 6724 / Z-1310).